The sequence spans 479 residues: Adenosylhomocysteinase (479 aa).

The substrate site is built by T66, D142, and E203. 204-206 (TTT) is an NAD(+) binding site. K233 and D237 together coordinate substrate. NAD(+) is bound by residues N238, 267–272 (GYGDVG), E290, N325, 346–348 (IGH), and N394.

This sequence belongs to the adenosylhomocysteinase family. It depends on NAD(+) as a cofactor.

The protein localises to the cytoplasm. The catalysed reaction is S-adenosyl-L-homocysteine + H2O = L-homocysteine + adenosine. It participates in amino-acid biosynthesis; L-homocysteine biosynthesis; L-homocysteine from S-adenosyl-L-homocysteine: step 1/1. In terms of biological role, may play a key role in the regulation of the intracellular concentration of adenosylhomocysteine. The sequence is that of Adenosylhomocysteinase from Oleidesulfovibrio alaskensis (strain ATCC BAA-1058 / DSM 17464 / G20) (Desulfovibrio alaskensis).